The sequence spans 259 residues: Thiazole synthase (259 aa).

K95 serves as the catalytic Schiff-base intermediate with DXP. Residues G156, 182–183 (AG), and 204–205 (NT) each bind 1-deoxy-D-xylulose 5-phosphate.

It belongs to the ThiG family. Homotetramer. Forms heterodimers with either ThiH or ThiS.

The protein localises to the cytoplasm. The enzyme catalyses [ThiS sulfur-carrier protein]-C-terminal-Gly-aminoethanethioate + 2-iminoacetate + 1-deoxy-D-xylulose 5-phosphate = [ThiS sulfur-carrier protein]-C-terminal Gly-Gly + 2-[(2R,5Z)-2-carboxy-4-methylthiazol-5(2H)-ylidene]ethyl phosphate + 2 H2O + H(+). The protein operates within cofactor biosynthesis; thiamine diphosphate biosynthesis. In terms of biological role, catalyzes the rearrangement of 1-deoxy-D-xylulose 5-phosphate (DXP) to produce the thiazole phosphate moiety of thiamine. Sulfur is provided by the thiocarboxylate moiety of the carrier protein ThiS. In vitro, sulfur can be provided by H(2)S. This is Thiazole synthase from Serratia proteamaculans (strain 568).